Reading from the N-terminus, the 393-residue chain is Exosome complex component RRP45 (393 aa).

The tract at residues 1-268 (MRDTPLSNCE…SEITELINKA (268 aa)) is ARE binding.

Belongs to the RNase PH family. As to quaternary structure, component of the RNA exosome complex.

The protein resides in the cytoplasm. It is found in the nucleus. Its subcellular location is the nucleolus. It localises to the nucleoplasm. In terms of biological role, non-catalytic component of the RNA exosome complex which has 3'-&gt;5' exoribonuclease activity and participates in a multitude of cellular RNA processing and degradation events. In the nucleus, the RNA exosome complex is involved in proper maturation of stable RNA species such as rRNA, snRNA and snoRNA, in the elimination of RNA processing by-products and non-coding 'pervasive' transcripts, such as antisense RNA species and promoter-upstream transcripts (PROMPTs), and of mRNAs with processing defects, thereby limiting or excluding their export to the cytoplasm. In the cytoplasm, the RNA exosome complex is involved in general mRNA turnover and specifically degrades inherently unstable mRNAs containing AU-rich elements (AREs) within their 3' untranslated regions, and in RNA surveillance pathways, preventing translation of aberrant mRNAs. This is Exosome complex component RRP45 from Danio rerio (Zebrafish).